We begin with the raw amino-acid sequence, 448 residues long: Multiple inositol polyphosphate phosphatase 1 (448 aa).

The signal sequence occupies residues 1–19 (MAPRRAACLLPLLVAVASA). His69 is a catalytic residue. N-linked (GlcNAc...) asparagine glycosylation is found at Asn203, Asn257, Asn409, and Asn441. The Prevents secretion from ER motif lies at 445-448 (ADEL).

Belongs to the histidine acid phosphatase family. MINPP1 subfamily. N-glycosylated. As to expression, present in growth plate chondrocytes but not detectable in articular chondrocytes (at protein level). Spatially restricted to chondrocytes in the lower portion of the proliferative zone and the upper portion of the hypertrophic zone in the growth plate of long bones (at protein level). Weakly expressed in kidney, liver, lung, skin and spleen, and not detected in brain, heart and muscle.

The protein resides in the endoplasmic reticulum lumen. The protein localises to the secreted. It is found in the cell membrane. The enzyme catalyses 1D-myo-inositol hexakisphosphate + H2O = 1D-myo-inositol 1,2,4,5,6-pentakisphosphate + phosphate. The catalysed reaction is 1D-myo-inositol 1,2,4,5,6-pentakisphosphate + H2O = 1D-myo-inositol 1,2,5,6-tetrakisphosphate + phosphate. It carries out the reaction 1D-myo-inositol 1,2,5,6-tetrakisphosphate + H2O = 1D-myo-inositol 1,2,6-trisphosphate + phosphate. It catalyses the reaction 1D-myo-inositol 1,2,6-trisphosphate + H2O = 1D-myo-inositol 1,2-bisphosphate + phosphate. The enzyme catalyses 1D-myo-inositol 1,2-bisphosphate + H2O = 1D-myo-inositol 2-phosphate + phosphate. The catalysed reaction is 1D-myo-inositol hexakisphosphate + H2O = 1D-myo-inositol 1,2,3,5,6-pentakisphosphate + phosphate. It carries out the reaction 1D-myo-inositol 1,2,3,5,6-pentakisphosphate + H2O = 1D-myo-inositol 1,2,3,6-tetrakisphosphate + phosphate. It catalyses the reaction 1D-myo-inositol 1,2,3,6-tetrakisphosphate + H2O = 1D-myo-inositol 1,2,3-trisphosphate + phosphate. The enzyme catalyses 1D-myo-inositol 1,2,3-trisphosphate + H2O = 1D-myo-inositol 2,3-bisphosphate + phosphate. The catalysed reaction is 1D-myo-inositol 2,3-bisphosphate + H2O = 1D-myo-inositol 2-phosphate + phosphate. It carries out the reaction 1D-myo-inositol 1,3,4,5,6-pentakisphosphate + H2O = 1D-myo-inositol 1,4,5,6-tetrakisphosphate + phosphate. It catalyses the reaction 1D-myo-inositol 1,4,5,6-tetrakisphosphate + H2O = 1D-myo-inositol 1,4,5-trisphosphate + phosphate. The enzyme catalyses (2R)-2,3-bisphosphoglycerate + H2O = (2R)-2-phosphoglycerate + phosphate. In terms of biological role, multiple inositol polyphosphate phosphatase that hydrolyzes 1D-myo-inositol 1,3,4,5,6-pentakisphosphate (InsP5[2OH]) and 1D-myo-inositol hexakisphosphate (InsP6) to a range of less phosphorylated inositol phosphates. This regulates the availability of these various small molecule second messengers and metal chelators which control many aspects of cell physiology. Has a weak in vitro activity towards 1D-myo-inositol 1,4,5-trisphosphate which is unlikely to be physiologically relevant. By regulating intracellular inositol polyphosphates pools, which act as metal chelators, it may control the availability of intracellular calcium and iron, which are important for proper neuronal development and homeostasis. May have a dual substrate specificity, and function as a 2,3-bisphosphoglycerate 3-phosphatase hydrolyzing 2,3-bisphosphoglycerate to 2-phosphoglycerate. 2,3-bisphosphoglycerate (BPG) is formed as part of the Rapoport-Luebering glycolytic bypass and is a regulator of systemic oxygen homeostasis as the major allosteric effector of hemoglobin. This is Multiple inositol polyphosphate phosphatase 1 (MINPP1) from Gallus gallus (Chicken).